The following is a 227-amino-acid chain: PKHD-type hydroxylase ACICU_00484 (227 aa).

In terms of domain architecture, Fe2OG dioxygenase spans 78–178; the sequence is DIIPPLFNRY…RIASFFWVQS (101 aa). Fe cation is bound by residues His96, Asp98, and His159. 2-oxoglutarate is bound at residue Arg169.

Requires Fe(2+) as cofactor. L-ascorbate is required as a cofactor.

This Acinetobacter baumannii (strain ACICU) protein is PKHD-type hydroxylase ACICU_00484.